A 565-amino-acid polypeptide reads, in one-letter code: Wee1-like protein kinase 2 (565 aa).

Basic and acidic residues-rich tracts occupy residues 1–12 and 26–52; these read MGDNGDNKELKQ and EGQK…DSEA. Disordered stretches follow at residues 1–142 and 169–189; these read MGDN…TPGP and KSNG…EEGK. Ser-77 bears the Phosphoserine mark. The Nuclear localization signal signature appears at 173 to 175; the sequence is KRK. The segment covering 178–189 has biased composition (basic and acidic residues); sequence RDLEEAGPEEGK. The Protein kinase domain occupies 214-492; that stretch reads FLEVEKIGVG…TRSRVLCPSL (279 aa). ATP-binding positions include 220–228 and Lys-243; that span reads IGVGEFGTV. The Nuclear export signal motif lies at 317–331; it reads KLKDILLQISLGLKY. Asp-341 serves as the catalytic Proton acceptor. 2 residues coordinate Mg(2+): Asn-346 and Asp-382. The stretch at 495 to 521 forms a coiled coil; sequence TEELQQQLNLEKFKTATLERELKEVQR. The disordered stretch occupies residues 518–565; sequence EVQRAQSSKEGQSSPGVTGTHTGSRSTRRLVGGKSAKSSSFTWGQSSP. Polar residues-rich tracts occupy residues 521 to 534 and 553 to 565; these read RAQS…SPGV and AKSS…QSSP.

Belongs to the protein kinase superfamily. Ser/Thr protein kinase family. WEE1 subfamily. In terms of processing, phosphorylation leads to increase its activity. As to expression, ovary-specific.

Its subcellular location is the nucleus. It catalyses the reaction L-tyrosyl-[protein] + ATP = O-phospho-L-tyrosyl-[protein] + ADP + H(+). Functionally, oocyte-specific protein tyrosine kinase that phosphorylates and inhibits CDK1 and acts as a key regulator of meiosis during both prophase I and metaphase II. Required to maintain meiotic arrest in oocytes during the germinal vesicle (GV) stage, a long period of quiescence at dictyate prophase I, by phosphorylating CDK1 at 'Tyr-15', leading to inhibit CDK1 activity and prevent meiotic reentry. Also required for metaphase II exit during egg activation by phosphorylating CDK1 at 'Tyr-15', to ensure exit from meiosis in oocytes and promote pronuclear formation. The sequence is that of Wee1-like protein kinase 2 (WEE2) from Sus scrofa (Pig).